The following is a 321-amino-acid chain: Phosphate metabolism protein 8 (321 aa).

This sequence belongs to the SSM1 family.

Functionally, may be involved in phosphate metabolism. The sequence is that of Phosphate metabolism protein 8 (PHM8) from Saccharomyces cerevisiae (strain ATCC 204508 / S288c) (Baker's yeast).